Consider the following 25-residue polypeptide: Alpha-lytic protease (25 aa).

It belongs to the peptidase S1 family.

The catalysed reaction is Preferential cleavage: Ala-|-Xaa, Val-|-Xaa in bacterial cell walls, elastin and other proteins.. This Achromobacter lyticus protein is Alpha-lytic protease.